Consider the following 138-residue polypeptide: Basic phospholipase A2 homolog 7 (138 aa).

Positions 1–16 (MRTLWLMAVLLVGVEG) are cleaved as a signal peptide. 6 cysteine pairs are disulfide-bonded: Cys42–Cys131, Cys44–Cys60, Cys59–Cys111, Cys65–Cys138, Cys66–Cys104, and Cys91–Cys102. The tract at residues 121-133 (KKKKINLKLFCKK) is important for membrane-damaging activities in eukaryotes and bacteria; heparin-binding.

It belongs to the phospholipase A2 family. Group II subfamily. K49 sub-subfamily. Expressed by the venom gland.

The protein resides in the secreted. Snake venom phospholipase A2 homolog that lacks enzymatic activity. Is myotoxic and displays edema-inducing activities. A model of myotoxic mechanism has been proposed: an apo Lys49-PLA2 is activated by the entrance of a hydrophobic molecule (e.g. fatty acid) at the hydrophobic channel of the protein leading to a reorientation of a monomer. This reorientation causes a transition between 'inactive' to 'active' states, causing alignment of C-terminal and membrane-docking sites (MDoS) side-by-side and putting the membrane-disruption sites (MDiS) in the same plane, exposed to solvent and in a symmetric position for both monomers. The MDoS region stabilizes the toxin on membrane by the interaction of charged residues with phospholipid head groups. Subsequently, the MDiS region destabilizes the membrane with penetration of hydrophobic residues. This insertion causes a disorganization of the membrane, allowing an uncontrolled influx of ions (i.e. calcium and sodium), and eventually triggering irreversible intracellular alterations and cell death. The sequence is that of Basic phospholipase A2 homolog 7 from Craspedocephalus gramineus (Bamboo pit viper).